Reading from the N-terminus, the 292-residue chain is Glycine--tRNA ligase alpha subunit (292 aa).

The protein belongs to the class-II aminoacyl-tRNA synthetase family. In terms of assembly, tetramer of two alpha and two beta subunits.

The protein resides in the cytoplasm. It catalyses the reaction tRNA(Gly) + glycine + ATP = glycyl-tRNA(Gly) + AMP + diphosphate. The chain is Glycine--tRNA ligase alpha subunit from Pelobacter propionicus (strain DSM 2379 / NBRC 103807 / OttBd1).